The chain runs to 447 residues: Phosphatidylinositol 4-kinase type 2-alpha (447 aa).

The tract at residues 1-77 (MDETSPLVSP…HRNEFPEDPE (77 aa)) is disordered. The span at 48–77 (RSRERQPLLDRDRGASPRDPHRNEFPEDPE) shows a compositional bias: basic and acidic residues. In terms of domain architecture, PI3K/PI4K catalytic spans 92–421 (GIYPERIYQG…VQMPPVIVET (330 aa)). A G-loop region spans residues 98 to 104 (IYQGSSG). ATP contacts are provided by residues 99-105 (YQGSSGS) and K120. The important for substrate binding stretch occupies residues 125-127 (EPY). The tract at residues 133 to 146 (KWTKWLQKLCCPCC) is important for interaction with membranes. Residues C142, C143, C145, and C146 are each lipidated (S-palmitoyl cysteine). 229-232 (QIFV) lines the ATP pocket. Positions 236-244 (KDADFWLRR) are important for interaction with membranes. Residues 273–281 (RNTDRGNDN) form a catalytic loop region. The interval 312–332 (AIDNGLAFPLKHPDSWRAYPF) is activation loop. ATP is bound at residue D314. The segment at 327-336 (WRAYPFYWAW) is important for interaction with membranes.

Belongs to the PI3/PI4-kinase family. Type II PI4K subfamily.

The protein resides in the golgi apparatus. It is found in the trans-Golgi network membrane. The protein localises to the membrane raft. Its subcellular location is the endosome. It localises to the cytoplasmic vesicle. The protein resides in the cell projection. It is found in the dendrite. The protein localises to the presynaptic cell membrane. Its subcellular location is the synapse. It localises to the synaptosome. The protein resides in the mitochondrion. It is found in the membrane. The protein localises to the cell membrane. Its subcellular location is the perikaryon. It localises to the neuron projection. The enzyme catalyses a 1,2-diacyl-sn-glycero-3-phospho-(1D-myo-inositol) + ATP = a 1,2-diacyl-sn-glycero-3-phospho-(1D-myo-inositol 4-phosphate) + ADP + H(+). In terms of biological role, membrane-bound phosphatidylinositol-4 kinase (PI4-kinase) that catalyzes the phosphorylation of phosphatidylinositol (PI) to phosphatidylinositol 4-phosphate (PI4P), a lipid that plays important roles in endocytosis, Golgi function, protein sorting and membrane trafficking. Besides, phosphorylation of phosphatidylinositol (PI) to phosphatidylinositol 4-phosphate (PI4P) is the first committed step in the generation of phosphatidylinositol 4,5-bisphosphate (PIP2), a precursor of the second messenger inositol 1,4,5-trisphosphate (InsP3). The polypeptide is Phosphatidylinositol 4-kinase type 2-alpha (pi4k2a) (Danio rerio (Zebrafish)).